Reading from the N-terminus, the 698-residue chain is Long-chain-fatty-acid--CoA ligase 1 (698 aa).

Met1 bears the N-acetylmethionine mark. Tyr9 is modified (3'-nitrotyrosine). The residue at position 84 (Tyr84) is a Phosphotyrosine. Ser135 carries an O-linked (GlcNAc) serine glycan. An N6-acetyllysine mark is found at Lys356 and Lys386. At Ser620 the chain carries Phosphoserine. Lys632 carries the N6-acetyllysine modification.

This sequence belongs to the ATP-dependent AMP-binding enzyme family. Mg(2+) is required as a cofactor.

It is found in the microsome membrane. Its subcellular location is the mitochondrion outer membrane. It localises to the peroxisome membrane. The protein resides in the endoplasmic reticulum membrane. The catalysed reaction is a long-chain fatty acid + ATP + CoA = a long-chain fatty acyl-CoA + AMP + diphosphate. It carries out the reaction (5Z,8Z,11Z,14Z)-eicosatetraenoate + ATP + CoA = (5Z,8Z,11Z,14Z)-eicosatetraenoyl-CoA + AMP + diphosphate. The enzyme catalyses 3,7,11,15-tetramethylhexadecanoate + ATP + CoA = phytanoyl-CoA + AMP + diphosphate. It catalyses the reaction hexadecanoate + ATP + CoA = hexadecanoyl-CoA + AMP + diphosphate. The catalysed reaction is (E)-hexadec-2-enoate + ATP + CoA = (2E)-hexadecenoyl-CoA + AMP + diphosphate. It carries out the reaction 2,6,10,14-tetramethylpentadecanoate + ATP + CoA = pristanoyl-CoA + AMP + diphosphate. The enzyme catalyses 14,15-epoxy-(5Z,8Z,11Z)-eicosatrienoate + ATP + CoA = 14,15-epoxy-(5Z,8Z,11Z)-eicosatrienoyl-CoA + AMP + diphosphate. It catalyses the reaction 5-hydroxy-(6E,8Z,11Z,14Z)-eicosatetraenoate + ATP + CoA = 5-hydroxy-(6E,8Z,11Z,14Z)-eicosatetraenoyl-CoA + AMP + diphosphate. The catalysed reaction is 12-hydroxy-(5Z,8Z,10E,14Z)-eicosatetraenoate + ATP + CoA = 12-hydroxy-(5Z,8Z,10E,14Z)-eicosatetraenoyl-CoA + AMP + diphosphate. It carries out the reaction 15-hydroxy-(5Z,8Z,11Z,13E)-eicosatetraenoate + ATP + CoA = 15-hydroxy-(5Z,8Z,11Z,13E)-eicosatetraenoyl-CoA + AMP + diphosphate. The enzyme catalyses (9Z)-octadecenoate + ATP + CoA = (9Z)-octadecenoyl-CoA + AMP + diphosphate. Inhibited at high temperature and by arachidonate. Catalyzes the conversion of long-chain fatty acids to their active form acyl-CoAs for both synthesis of cellular lipids, and degradation via beta-oxidation. Preferentially uses palmitoleate, oleate and linoleate. Preferentially activates arachidonate than epoxyeicosatrienoic acids (EETs) or hydroxyeicosatrienoic acids (HETEs). The sequence is that of Long-chain-fatty-acid--CoA ligase 1 from Cavia porcellus (Guinea pig).